We begin with the raw amino-acid sequence, 1015 residues long: Proline-rich basic protein 1 (1015 aa).

Disordered regions lie at residues 1-111, 139-164, 196-236, 259-460, 488-678, 690-883, and 991-1015; these read MLTA…SGEM, AFISPLPPGPASPAAVPRQSQVPDGG, GAAP…RTGS, LSPE…ILSQ, DAVE…APAH, VVPH…GKVL, and PPLLLCAPPSSSGPTQPGKGSLFPL. Gly residues predominate over residues 84-94; sequence PGSGFPRGPGS. A compositionally biased stretch (low complexity) spans 220–233; sequence PRAAGAPRPRLLLR. A compositionally biased stretch (polar residues) spans 267-276; it reads SSATFGSTGR. Basic and acidic residues-rich tracts occupy residues 277-304, 318-328, and 346-367; these read SEPETRETARSTHVVLEKAKSRPLRVRD, LRERAIRRDKP, and SEEKIQEARKTRFPREAPDRTV. Positions 380–391 are enriched in low complexity; it reads PSEVPSRAVRPR. Positions 531-542 are enriched in polar residues; sequence IAFTQEAQNGLT. Pro residues-rich tracts occupy residues 548–557 and 691–700; these read PPTPSAPGTP and VPHPYEPPEP. A compositionally biased stretch (basic and acidic residues) spans 759-774; the sequence is ENRDVEAQRLVPDGDG. Residues 813–825 are compositionally biased toward pro residues; the sequence is GIAPKPKTPPTAP. Low complexity-rich tracts occupy residues 826–835 and 847–858; these read EPAAAVQAPL and APAQPRAASAPP. The segment covering 861 to 870 has biased composition (polar residues); that stretch reads RSPQSPSQGA. Residues 993–1004 are compositionally biased toward low complexity; the sequence is LLLCAPPSSSGP.

The chain is Proline-rich basic protein 1 (PROB1) from Homo sapiens (Human).